A 121-amino-acid polypeptide reads, in one-letter code: Large ribosomal subunit protein bL19 (121 aa).

This sequence belongs to the bacterial ribosomal protein bL19 family.

This protein is located at the 30S-50S ribosomal subunit interface and may play a role in the structure and function of the aminoacyl-tRNA binding site. The chain is Large ribosomal subunit protein bL19 from Chlorobium phaeobacteroides (strain BS1).